The primary structure comprises 357 residues: Sorbitol dehydrogenase (357 aa).

A2 bears the N-acetylalanine mark. C45 serves as a coordination point for Zn(2+). Y51 contacts substrate. Residues H70, E71, and E156 each coordinate Zn(2+). Position 156 (E156) interacts with substrate. At S169 the chain carries Phosphoserine. Residues I184, D204, R209, 273-275, and 297-299 each bind NAD(+); these read VGM and VFR. 2 residues coordinate substrate: R299 and Y300.

It belongs to the zinc-containing alcohol dehydrogenase family. Homotetramer; dimer of dimers. The cofactor is Zn(2+). As to expression, expressed in liver and testis.

It is found in the mitochondrion membrane. The protein resides in the cell projection. Its subcellular location is the cilium. It localises to the flagellum. It catalyses the reaction keto-D-fructose + NADH + H(+) = D-sorbitol + NAD(+). It carries out the reaction xylitol + NAD(+) = D-xylulose + NADH + H(+). The catalysed reaction is L-iditol + NAD(+) = keto-L-sorbose + NADH + H(+). Its function is as follows. Polyol dehydrogenase that catalyzes the reversible NAD(+)-dependent oxidation of various sugar alcohols. Is active with D-sorbitol (D-glucitol) leading to the C2-oxidized product D-fructose. Is a key enzyme in the polyol pathway that interconverts glucose and fructose via sorbitol, which constitutes an important alternate route for glucose metabolism. May play a role in sperm motility by using sorbitol as an alternative energy source for sperm motility. The polypeptide is Sorbitol dehydrogenase (Sord) (Rattus norvegicus (Rat)).